We begin with the raw amino-acid sequence, 112 residues long: Putative acyl carrier protein, mitochondrial (112 aa).

The transit peptide at 1 to 28 (MLSRFSSQLRFISAVRPVIPKFQPLRFY) directs the protein to the mitochondrion. The Carrier domain occupies 33-109 (PDAEKRILKV…DAISYITKNP (77 aa)). Position 69 is an O-(pantetheine 4'-phosphoryl)serine (serine 69).

This sequence belongs to the acyl carrier protein (ACP) family. Post-translationally, 4'-phosphopantetheine is transferred from CoA to a specific serine of apo-ACP by acpS. This modification is essential for activity because fatty acids are bound in thioester linkage to the sulfhydryl of the prosthetic group.

It localises to the mitochondrion. Its pathway is lipid metabolism; fatty acid biosynthesis. Carrier of the growing fatty acid chain in fatty acid biosynthesis. May be involved in the synthesis of very-long-chain fatty acids. This is Putative acyl carrier protein, mitochondrial from Schizosaccharomyces pombe (strain 972 / ATCC 24843) (Fission yeast).